A 160-amino-acid polypeptide reads, in one-letter code: Zinc finger A20 and AN1 domain-containing stress-associated protein 6 (160 aa).

The A20-type zinc-finger motif lies at 18-52; sequence PEAPILCVNNCGFFGSRMTENMCSKCYRDTVKAKT. The Zn(2+) site is built by cysteine 24, cysteine 28, cysteine 40, and cysteine 43. The interval 73–94 is disordered; the sequence is EVTDGGSGSVADGKQVMEEDTP. The AN1-type zinc-finger motif lies at 95-141; the sequence is KPPSNRCLSCRKKVGLTGFKCRCGGTFCSMHRYADSHKCTFDYKQVG. Cysteine 101, cysteine 104, cysteine 115, cysteine 117, cysteine 122, histidine 125, histidine 131, and cysteine 133 together coordinate Zn(2+).

Functionally, may be involved in environmental stress response. This Oryza sativa subsp. japonica (Rice) protein is Zinc finger A20 and AN1 domain-containing stress-associated protein 6 (SAP6).